The chain runs to 272 residues: Dermonecrotic toxin SpeSicTox-betaIB1a (272 aa).

His-5 is a catalytic residue. Glu-25 and Asp-27 together coordinate Mg(2+). Catalysis depends on His-41, which acts as the Nucleophile. Disulfide bonds link Cys-45/Cys-51 and Cys-47/Cys-191. Asp-85 contributes to the Mg(2+) binding site.

Belongs to the arthropod phospholipase D family. Class II subfamily. It depends on Mg(2+) as a cofactor. In terms of tissue distribution, expressed by the venom gland.

The protein resides in the secreted. It catalyses the reaction an N-(acyl)-sphingosylphosphocholine = an N-(acyl)-sphingosyl-1,3-cyclic phosphate + choline. It carries out the reaction an N-(acyl)-sphingosylphosphoethanolamine = an N-(acyl)-sphingosyl-1,3-cyclic phosphate + ethanolamine. The catalysed reaction is a 1-acyl-sn-glycero-3-phosphocholine = a 1-acyl-sn-glycero-2,3-cyclic phosphate + choline. The enzyme catalyses a 1-acyl-sn-glycero-3-phosphoethanolamine = a 1-acyl-sn-glycero-2,3-cyclic phosphate + ethanolamine. Its function is as follows. Dermonecrotic toxins cleave the phosphodiester linkage between the phosphate and headgroup of certain phospholipids (sphingolipid and lysolipid substrates), forming an alcohol (often choline) and a cyclic phosphate. This toxin acts on sphingomyelin (SM). It may also act on ceramide phosphoethanolamine (CPE), lysophosphatidylcholine (LPC) and lysophosphatidylethanolamine (LPE), but not on lysophosphatidylserine (LPS), and lysophosphatidylglycerol (LPG). It acts by transphosphatidylation, releasing exclusively cyclic phosphate products as second products. Induces dermonecrosis, hemolysis, increased vascular permeability, edema, inflammatory response, and platelet aggregation. This chain is Dermonecrotic toxin SpeSicTox-betaIB1a, found in Sicarius peruensis (Six-eyed sand spider).